The chain runs to 211 residues: Protein-L-isoaspartate O-methyltransferase (211 aa).

Ser-62 is an active-site residue.

Belongs to the methyltransferase superfamily. L-isoaspartyl/D-aspartyl protein methyltransferase family.

The protein localises to the cytoplasm. It catalyses the reaction [protein]-L-isoaspartate + S-adenosyl-L-methionine = [protein]-L-isoaspartate alpha-methyl ester + S-adenosyl-L-homocysteine. Catalyzes the methyl esterification of L-isoaspartyl residues in peptides and proteins that result from spontaneous decomposition of normal L-aspartyl and L-asparaginyl residues. It plays a role in the repair and/or degradation of damaged proteins. In Shewanella pealeana (strain ATCC 700345 / ANG-SQ1), this protein is Protein-L-isoaspartate O-methyltransferase.